A 372-amino-acid polypeptide reads, in one-letter code: Beta-1,3-N-acetylglucosaminyltransferase radical fringe (372 aa).

The Cytoplasmic portion of the chain corresponds to 1–10 (MNSSCLGLRR). A helical; Signal-anchor for type II membrane protein membrane pass occupies residues 11-27 (TCFLLSVTAAAVLLLLL). The Lumenal segment spans residues 28-372 (PRGQPPAAPR…TIWCPNKKMS (345 aa)). The segment covering 30–48 (GQPPAAPRRRPPPAGPSRP) has biased composition (pro residues). The tract at residues 30 to 96 (GQPPAAPRRR…RVRMGPPGGS (67 aa)) is disordered. Residues 64 to 78 (DRGGGSGAAGGGRGV) are compositionally biased toward gly residues. Arg120 lines the substrate pocket. A glycan (N-linked (GlcNAc...) asparagine) is linked at Asn159. 2 disulfide bridges follow: Cys160–Cys171 and Cys189–Cys253. Asp193 serves as a coordination point for substrate. Asp194 is a binding site for Mn(2+). Residue Asp283 is part of the active site. His307 serves as a coordination point for Mn(2+). Cys357 and Cys366 are joined by a disulfide.

The protein belongs to the glycosyltransferase 31 family. It depends on Mn(2+) as a cofactor.

The protein resides in the golgi apparatus membrane. It carries out the reaction 3-O-(alpha-L-fucosyl)-L-threonyl-[EGF-like domain protein] + UDP-N-acetyl-alpha-D-glucosamine = 3-O-(N-acetyl-beta-D-glucosaminyl-(1-&gt;3)-alpha-L-fucosyl)-L-threonyl-[EGF-like domain protein] + UDP + H(+). It catalyses the reaction 3-O-(alpha-L-fucosyl)-L-seryl-[EGF-like domain protein] + UDP-N-acetyl-alpha-D-glucosamine = 3-O-(N-acetyl-beta-D-glucosaminyl-(1-&gt;3)-alpha-L-fucosyl)-L-seryl-[EGF-like domain protein] + UDP + H(+). Functionally, glycosyltransferase that initiates the elongation of O-linked fucose residues attached to EGF-like repeats in the extracellular domain of Notch molecules. Plays an important role in limb outgrowth, it directs the formation and positioning of the apical ectodermal ridge (AER), one of the key organizer centers of vertebrate limb development. This chain is Beta-1,3-N-acetylglucosaminyltransferase radical fringe (RFNG), found in Gallus gallus (Chicken).